The sequence spans 83 residues: Small ribosomal subunit protein uS17 (83 aa).

It belongs to the universal ribosomal protein uS17 family. Part of the 30S ribosomal subunit.

In terms of biological role, one of the primary rRNA binding proteins, it binds specifically to the 5'-end of 16S ribosomal RNA. This chain is Small ribosomal subunit protein uS17, found in Campylobacter jejuni subsp. jejuni serotype O:6 (strain 81116 / NCTC 11828).